The sequence spans 716 residues: 1,4-alpha-glucan branching enzyme GlgB (716 aa).

The Nucleophile role is filled by Asp398. Residue Glu451 is the Proton donor of the active site.

Belongs to the glycosyl hydrolase 13 family. GlgB subfamily. In terms of assembly, monomer.

It catalyses the reaction Transfers a segment of a (1-&gt;4)-alpha-D-glucan chain to a primary hydroxy group in a similar glucan chain.. It participates in glycan biosynthesis; glycogen biosynthesis. In terms of biological role, catalyzes the formation of the alpha-1,6-glucosidic linkages in glycogen by scission of a 1,4-alpha-linked oligosaccharide from growing alpha-1,4-glucan chains and the subsequent attachment of the oligosaccharide to the alpha-1,6 position. This chain is 1,4-alpha-glucan branching enzyme GlgB, found in Nitrobacter hamburgensis (strain DSM 10229 / NCIMB 13809 / X14).